The chain runs to 401 residues: Glycerol-3-phosphate dehydrogenase [NAD(+)] 1 (401 aa).

Residues 40-45 (GSGNWG), Phe-128, Lys-151, and Ala-184 contribute to the NAD(+) site. Lys-151 contacts substrate. The active-site Proton acceptor is Lys-244. 2 residues coordinate NAD(+): Arg-309 and Gln-338. Residue 309–310 (RN) coordinates substrate.

It belongs to the NAD-dependent glycerol-3-phosphate dehydrogenase family.

It localises to the cytoplasm. The enzyme catalyses sn-glycerol 3-phosphate + NAD(+) = dihydroxyacetone phosphate + NADH + H(+). This Zygosaccharomyces rouxii protein is Glycerol-3-phosphate dehydrogenase [NAD(+)] 1 (GPD1).